A 183-amino-acid polypeptide reads, in one-letter code: Myelin-associated oligodendrocyte basic protein (183 aa).

Residues Thr68–Trp183 are disordered. Positions Arg69–Gln78 are enriched in basic residues. Low complexity predominate over residues Arg79 to Lys96. 4 repeat units span residues Pro97–Gln106, Pro107–Gln116, Pro117–Gln126, and Pro127–Gln136. The interval Pro97–Gln136 is 4 X 10 AA tandem repeats of P-R-S-P-P-R-S-E-R-Q. 2 positions are modified to phosphoserine: Ser99 and Ser109. Positions Pro101–Val143 are enriched in basic and acidic residues. Over residues Arg151–Pro164 the composition is skewed to low complexity.

It is found in the cytoplasm. The protein localises to the perinuclear region. May play a role in compacting or stabilizing the myelin sheath, possibly by binding the negatively charged acidic phospholipids of the cytoplasmic membrane. The chain is Myelin-associated oligodendrocyte basic protein (MOBP) from Homo sapiens (Human).